Consider the following 967-residue polypeptide: Leucine-rich repeat-containing G-protein coupled receptor 6 (967 aa).

A signal peptide spans 1–24; the sequence is MPSPPGLRALWLCAALCASRRAGG. The Extracellular portion of the chain corresponds to 25 to 567; that stretch reads APQPGPGPTA…LFESWGIRLA (543 aa). An LRRNT domain is found at 26–66; it reads PQPGPGPTACPAPCHCQEDGIMLSADCSELGLSAVPGDLDP. N-linked (GlcNAc...) asparagine glycosylation occurs at N77. 15 LRR repeats span residues 91–112, 115–136, 139–160, 163–186, 187–208, 211–232, 235–256, 258–279, 282–303, 306–328, 329–350, 353–374, 375–396, 399–420, and 423–443; these read FLEE…AFSG, SLKI…ALWE, SLQS…SFEG, SLRH…NNLP, ALQA…AFQN, SLVV…SFEG, NLET…IRTL, RLQE…AFMG, LLQT…AFQY, KLHT…KGTT, SLEI…MCQQ, RLRV…HRCQ, KLEE…TFSQ, SLQA…AFST, and SLVK…AGLG. N208 carries N-linked (GlcNAc...) asparagine glycosylation. A helical transmembrane segment spans residues 568–588; it reads VWAIVLLSVLCNGLVLLTVFA. Residues 589 to 598 are Cytoplasmic-facing; the sequence is GGPVPLPPVK. Residues 599–619 traverse the membrane as a helical segment; that stretch reads FVVGAIAGANTLTGISCGLLA. At 620–644 the chain is on the extracellular side; that stretch reads SVDALTFGQFSEYGARWETGLGCRA. A disulfide bridge connects residues C642 and C717. Residues 645-665 form a helical membrane-spanning segment; it reads TGFLAVLGSEASVLLLTLAAV. Over 666 to 687 the chain is Cytoplasmic; sequence QCSVSVSCVRAYGKSPSLGSVR. Residues 688-708 form a helical membrane-spanning segment; sequence AGVLGCLALAGLAAALPLASV. The Extracellular portion of the chain corresponds to 709–727; sequence GEYGASPLCLPYAPPEGQP. A helical membrane pass occupies residues 728 to 748; the sequence is AALGFTVALVMMNSFCFLVVA. At 749 to 774 the chain is on the cytoplasmic side; that stretch reads GAYIKLYCDLPRGDFEAVWDCAMVRH. A helical transmembrane segment spans residues 775-795; the sequence is VAWLIFADGLLYCPVAFLSFA. The Extracellular portion of the chain corresponds to 796 to 809; sequence SMLGLFPVTPEAVK. A helical transmembrane segment spans residues 810–830; sequence SVLLVVLPLPACLNPLLYLLF. The Cytoplasmic portion of the chain corresponds to 831–967; it reads NPHFRDDLRR…PSGLAFASHV (137 aa).

Belongs to the G-protein coupled receptor 1 family.

It is found in the cell membrane. Receptor for R-spondins that potentiates the canonical Wnt signaling pathway and acts as a marker of multipotent stem cells in the epidermis. Upon binding to R-spondins (RSPO1, RSPO2, RSPO3 or RSPO4), associates with phosphorylated LRP6 and frizzled receptors that are activated by extracellular Wnt receptors, triggering the canonical Wnt signaling pathway to increase expression of target genes. In contrast to classical G-protein coupled receptors, does not activate heterotrimeric G-proteins to transduce the signal. May act as a tumor suppressor. The sequence is that of Leucine-rich repeat-containing G-protein coupled receptor 6 (LGR6) from Homo sapiens (Human).